Consider the following 355-residue polypeptide: MKLNVNLPHHPYDILIKKGSLSQAGSWLSQLWQPQRVVIVTDNRVARLYAEKVKLSLEAAGFETFVFDFLEGEASKNLKTVNKVYEFLVKVGLTRSDGIVALGGGVVGDLAGFAASTYMRGVHFVQIPTSLTAQVDSSIGGKTGVNTPWAKNMVGTFTQPDGVLIDPEVLHTLGQRELIEGMGEVVKYGLIEDKELWDELSEMDGSPESILEHAESIIYHSCDVKRKIVVEDELDNGVRLYLNFGHTIGHAIEATAGYGKVMHGEAVAIGMVQVSRVAEKKGLMPAGITENIIHMCQKFGLPVDYQPWNEAALYQALTHDKKARGNSIKLVLVPELGSASIHQIPLEEMKEFLKK.

NAD(+) contacts are provided by residues 71–76 (EGEASK), 105–109 (GVVGD), 129–130 (TS), K142, and K151. Positions 184, 246, and 263 each coordinate Zn(2+).

This sequence belongs to the sugar phosphate cyclases superfamily. Dehydroquinate synthase family. Co(2+) is required as a cofactor. It depends on Zn(2+) as a cofactor. Requires NAD(+) as cofactor.

Its subcellular location is the cytoplasm. It catalyses the reaction 7-phospho-2-dehydro-3-deoxy-D-arabino-heptonate = 3-dehydroquinate + phosphate. It participates in metabolic intermediate biosynthesis; chorismate biosynthesis; chorismate from D-erythrose 4-phosphate and phosphoenolpyruvate: step 2/7. In terms of biological role, catalyzes the conversion of 3-deoxy-D-arabino-heptulosonate 7-phosphate (DAHP) to dehydroquinate (DHQ). The protein is 3-dehydroquinate synthase of Streptococcus sanguinis (strain SK36).